Here is a 404-residue protein sequence, read N- to C-terminus: Odorant receptor 74a (404 aa).

Topologically, residues 1–38 are cytoplasmic; sequence MSFHRYRPRLPGGELAPMPWPVSLYRVLNHVAWPLEAE. The chain crosses the membrane as a helical span at residues 39–59; sequence SGRWTVFLDRLMIFLGFLVFC. The Extracellular segment spans residues 60 to 67; that stretch reads EHNEVDFH. Residues 68–88 form a helical membrane-spanning segment; the sequence is YLIANRQDMDNMLTGLPTYLI. At 89–141 the chain is on the cytoplasmic side; that stretch reads LVEMQIRCFQLAWHKDRFRALLQRFYAEIYVSEEMEPHLFASIQRQMLATRVN. The chain crosses the membrane as a helical span at residues 142–162; the sequence is STVYLLALLNFFLVPVTNVIY. The Extracellular portion of the chain corresponds to 163-181; sequence HRREMLYKQVYPFDNTQLH. Residues 182 to 202 traverse the membrane as a helical segment; the sequence is FFIPLLVLNFWVGFIITSMLF. Residues 203–274 are Cytoplasmic-facing; that stretch reads GELNVMGELM…QRVEKEFTLR (72 aa). The helical transmembrane segment at 275 to 295 threads the bilayer; it reads IFVMFAFSAGLLCALFFKAFT. Over 296–303 the chain is Extracellular; it reads NPWGNVAY. A helical membrane pass occupies residues 304–324; it reads IVWFLAKFMELLALGMLGSIL. Over 325 to 380 the chain is Cytoplasmic; sequence LKTTDELGMMYYTADWEQVIHQSDNVGENVKLMKLVTLAIQLNSRPFFITGLNYFR. A helical membrane pass occupies residues 381–401; the sequence is VSLTAVLKIIQGAFSYFTFLN. The Extracellular segment spans residues 402–404; it reads SMR.

It belongs to the insect chemoreceptor superfamily. Heteromeric odorant receptor channel (TC 1.A.69) family. Or1a subfamily. In terms of assembly, interacts with Orco. Complexes exist early in the endomembrane system in olfactory sensory neurons (OSNs), coupling these complexes to the conserved ciliary trafficking pathway.

It is found in the cell membrane. Functionally, odorant receptor which mediates acceptance or avoidance behavior, depending on its substrates. The odorant receptor repertoire encodes a large collection of odor stimuli that vary widely in identity, intensity, and duration. May form a complex with Orco to form odorant-sensing units, providing sensitive and prolonged odorant signaling and calcium permeability. Involved in the behavioral responses to octanol, anisole, and 2-heptanone. This Drosophila melanogaster (Fruit fly) protein is Odorant receptor 74a (Or74a).